We begin with the raw amino-acid sequence, 91 residues long: DNA/RNA-binding protein Alba (91 aa).

It belongs to the histone-like Alba family.

It localises to the cytoplasm. The protein resides in the chromosome. Its function is as follows. Binds double-stranded DNA tightly but without sequence specificity. Involved in DNA compaction. This is DNA/RNA-binding protein Alba from Methanoculleus marisnigri (strain ATCC 35101 / DSM 1498 / JR1).